We begin with the raw amino-acid sequence, 222 residues long: Cytochrome b6 (222 aa).

The chain crosses the membrane as a helical span at residues 39–59; it reads IFYCLGGITLTCFLIQFATGF. Cysteine 42 is a binding site for heme c. Residues histidine 93 and histidine 107 each coordinate heme b. A run of 3 helical transmembrane segments spans residues 97–117, 123–143, and 193–213; these read ASMM…TGGF, LTWV…VTGY, and LHTF…FLMI. 2 residues coordinate heme b: histidine 194 and histidine 209.

It belongs to the cytochrome b family. PetB subfamily. The 4 large subunits of the cytochrome b6-f complex are cytochrome b6, subunit IV (17 kDa polypeptide, PetD), cytochrome f and the Rieske protein, while the 4 small subunits are PetG, PetL, PetM and PetN. The complex functions as a dimer. Heme b serves as cofactor. The cofactor is heme c.

It localises to the cellular thylakoid membrane. Its function is as follows. Component of the cytochrome b6-f complex, which mediates electron transfer between photosystem II (PSII) and photosystem I (PSI), cyclic electron flow around PSI, and state transitions. The sequence is that of Cytochrome b6 from Cyanothece sp. (strain PCC 7425 / ATCC 29141).